A 320-amino-acid chain; its full sequence is Malate dehydrogenase (320 aa).

NAD(+) is bound by residues 10 to 15 (GAGQIG) and Asp34. Residues Arg83 and Arg89 each contribute to the substrate site. Residues Asn96 and 119 to 121 (ITN) each bind NAD(+). Substrate-binding residues include Asn121 and Arg152. Residue His176 is the Proton acceptor of the active site.

It belongs to the LDH/MDH superfamily. MDH type 3 family.

The catalysed reaction is (S)-malate + NAD(+) = oxaloacetate + NADH + H(+). Its function is as follows. Catalyzes the reversible oxidation of malate to oxaloacetate. The protein is Malate dehydrogenase of Cereibacter sphaeroides (strain ATCC 17025 / ATH 2.4.3) (Rhodobacter sphaeroides).